A 251-amino-acid polypeptide reads, in one-letter code: Imidazole glycerol phosphate synthase subunit HisF (251 aa).

Active-site residues include D11 and D130.

This sequence belongs to the HisA/HisF family. In terms of assembly, heterodimer of HisH and HisF.

It is found in the cytoplasm. The enzyme catalyses 5-[(5-phospho-1-deoxy-D-ribulos-1-ylimino)methylamino]-1-(5-phospho-beta-D-ribosyl)imidazole-4-carboxamide + L-glutamine = D-erythro-1-(imidazol-4-yl)glycerol 3-phosphate + 5-amino-1-(5-phospho-beta-D-ribosyl)imidazole-4-carboxamide + L-glutamate + H(+). Its pathway is amino-acid biosynthesis; L-histidine biosynthesis; L-histidine from 5-phospho-alpha-D-ribose 1-diphosphate: step 5/9. Functionally, IGPS catalyzes the conversion of PRFAR and glutamine to IGP, AICAR and glutamate. The HisF subunit catalyzes the cyclization activity that produces IGP and AICAR from PRFAR using the ammonia provided by the HisH subunit. This is Imidazole glycerol phosphate synthase subunit HisF from Chloroherpeton thalassium (strain ATCC 35110 / GB-78).